A 155-amino-acid polypeptide reads, in one-letter code: Endoribonuclease YbeY (155 aa).

Residues histidine 120, histidine 124, and histidine 130 each contribute to the Zn(2+) site.

Belongs to the endoribonuclease YbeY family. Requires Zn(2+) as cofactor.

It is found in the cytoplasm. Functionally, single strand-specific metallo-endoribonuclease involved in late-stage 70S ribosome quality control and in maturation of the 3' terminus of the 16S rRNA. The polypeptide is Endoribonuclease YbeY (Staphylococcus epidermidis (strain ATCC 35984 / DSM 28319 / BCRC 17069 / CCUG 31568 / BM 3577 / RP62A)).